The following is a 274-amino-acid chain: tRNA-cytidine(32) 2-sulfurtransferase (274 aa).

The PP-loop motif signature appears at 40–45 (SGGKDS). Residues cysteine 115, cysteine 118, and cysteine 206 each contribute to the [4Fe-4S] cluster site.

The protein belongs to the TtcA family. As to quaternary structure, homodimer. Requires Mg(2+) as cofactor. [4Fe-4S] cluster is required as a cofactor.

Its subcellular location is the cytoplasm. The enzyme catalyses cytidine(32) in tRNA + S-sulfanyl-L-cysteinyl-[cysteine desulfurase] + AH2 + ATP = 2-thiocytidine(32) in tRNA + L-cysteinyl-[cysteine desulfurase] + A + AMP + diphosphate + H(+). It functions in the pathway tRNA modification. Functionally, catalyzes the ATP-dependent 2-thiolation of cytidine in position 32 of tRNA, to form 2-thiocytidine (s(2)C32). The sulfur atoms are provided by the cysteine/cysteine desulfurase (IscS) system. In Pseudomonas putida (strain ATCC 700007 / DSM 6899 / JCM 31910 / BCRC 17059 / LMG 24140 / F1), this protein is tRNA-cytidine(32) 2-sulfurtransferase.